We begin with the raw amino-acid sequence, 501 residues long: Ribonuclease Y (501 aa).

The helical transmembrane segment at 7-27 (LVVIALLGALTLLTAGHVLAL) threads the bilayer. In terms of domain architecture, KH spans 190–256 (VVRAVPLPEE…RLTLEKLVAD (67 aa)). The HD domain occupies 316–409 (VLAHLVESAH…TQAADAISGG (94 aa)).

The protein belongs to the RNase Y family.

Its subcellular location is the cell membrane. Its function is as follows. Endoribonuclease that initiates mRNA decay. The chain is Ribonuclease Y from Thermobifida fusca (strain YX).